We begin with the raw amino-acid sequence, 716 residues long: UvrABC system protein C (716 aa).

One can recognise a GIY-YIG domain in the interval Ala14–Ile94. One can recognise a UVR domain in the interval Thr206–Ser241.

It belongs to the UvrC family. Interacts with UvrB in an incision complex.

It localises to the cytoplasm. Its function is as follows. The UvrABC repair system catalyzes the recognition and processing of DNA lesions. UvrC both incises the 5' and 3' sides of the lesion. The N-terminal half is responsible for the 3' incision and the C-terminal half is responsible for the 5' incision. The protein is UvrABC system protein C of Anaeromyxobacter sp. (strain Fw109-5).